Reading from the N-terminus, the 97-residue chain is Large ribosomal subunit protein uL23 (97 aa).

Belongs to the universal ribosomal protein uL23 family. In terms of assembly, part of the 50S ribosomal subunit. Contacts protein L29, and trigger factor when it is bound to the ribosome.

Its function is as follows. One of the early assembly proteins it binds 23S rRNA. One of the proteins that surrounds the polypeptide exit tunnel on the outside of the ribosome. Forms the main docking site for trigger factor binding to the ribosome. In Lactiplantibacillus plantarum (strain ATCC BAA-793 / NCIMB 8826 / WCFS1) (Lactobacillus plantarum), this protein is Large ribosomal subunit protein uL23.